Reading from the N-terminus, the 265-residue chain is Tryptophan synthase alpha chain (265 aa).

Residues Glu49 and Asp60 each act as proton acceptor in the active site.

This sequence belongs to the TrpA family. Tetramer of two alpha and two beta chains.

The catalysed reaction is (1S,2R)-1-C-(indol-3-yl)glycerol 3-phosphate + L-serine = D-glyceraldehyde 3-phosphate + L-tryptophan + H2O. It functions in the pathway amino-acid biosynthesis; L-tryptophan biosynthesis; L-tryptophan from chorismate: step 5/5. In terms of biological role, the alpha subunit is responsible for the aldol cleavage of indoleglycerol phosphate to indole and glyceraldehyde 3-phosphate. In Polynucleobacter asymbioticus (strain DSM 18221 / CIP 109841 / QLW-P1DMWA-1) (Polynucleobacter necessarius subsp. asymbioticus), this protein is Tryptophan synthase alpha chain.